Consider the following 458-residue polypeptide: Flap endonuclease 1 (458 aa).

Residues 1–105 (MGIKGLTGLL…GVLSKRFEKR (105 aa)) form an N-domain region. Position 34 (Asp-34) interacts with Mg(2+). The DNA site is built by Arg-47 and Arg-71. Positions 87, 159, 161, 180, and 182 each coordinate Mg(2+). Residues 123 to 254 (DVDRFSRRTV…KSALKLIREF (132 aa)) are I-domain. Residue Glu-159 participates in DNA binding. Residues Gly-232 and Asp-234 each contribute to the DNA site. Residue Asp-234 coordinates Mg(2+). Disordered stretches follow at residues 268 to 347 (AAAR…IPDE) and 416 to 458 (GFFT…AKKK). Acidic residues-rich tracts occupy residues 275 to 285 (AEEEDEEEAEE) and 293 to 309 (EMPD…DEEE). The span at 310–329 (AERRKKAEAAKKKKAQEKAK) shows a compositional bias: basic and acidic residues. An interaction with PCNA region spans residues 410 to 418 (QQGRLDGFF). Positions 442–452 (RKGEDKAEGSG) are enriched in basic and acidic residues.

Belongs to the XPG/RAD2 endonuclease family. FEN1 subfamily. Interacts with PCNA. Three molecules of FEN1 bind to one PCNA trimer with each molecule binding to one PCNA monomer. PCNA stimulates the nuclease activity without altering cleavage specificity. Mg(2+) is required as a cofactor. Phosphorylated. Phosphorylation upon DNA damage induces relocalization to the nuclear plasma.

It is found in the nucleus. The protein localises to the nucleolus. The protein resides in the nucleoplasm. Its subcellular location is the mitochondrion. Structure-specific nuclease with 5'-flap endonuclease and 5'-3' exonuclease activities involved in DNA replication and repair. During DNA replication, cleaves the 5'-overhanging flap structure that is generated by displacement synthesis when DNA polymerase encounters the 5'-end of a downstream Okazaki fragment. It enters the flap from the 5'-end and then tracks to cleave the flap base, leaving a nick for ligation. Also involved in the long patch base excision repair (LP-BER) pathway, by cleaving within the apurinic/apyrimidinic (AP) site-terminated flap. Acts as a genome stabilization factor that prevents flaps from equilibrating into structures that lead to duplications and deletions. Also possesses 5'-3' exonuclease activity on nicked or gapped double-stranded DNA, and exhibits RNase H activity. Also involved in replication and repair of rDNA and in repairing mitochondrial DNA. This is Flap endonuclease 1 from Coprinopsis cinerea (strain Okayama-7 / 130 / ATCC MYA-4618 / FGSC 9003) (Inky cap fungus).